Here is a 269-residue protein sequence, read N- to C-terminus: Glutamate racemase (269 aa).

Substrate-binding positions include 7-8 and 39-40; these read DS and YG. Residue Cys-70 is the Proton donor/acceptor of the active site. Position 71-72 (71-72) interacts with substrate; sequence NT. Cys-194 acts as the Proton donor/acceptor in catalysis. Residue 195-196 participates in substrate binding; the sequence is TH.

The protein belongs to the aspartate/glutamate racemases family.

The enzyme catalyses L-glutamate = D-glutamate. It functions in the pathway cell wall biogenesis; peptidoglycan biosynthesis. Functionally, provides the (R)-glutamate required for cell wall biosynthesis. The chain is Glutamate racemase from Ruegeria sp. (strain TM1040) (Silicibacter sp.).